We begin with the raw amino-acid sequence, 429 residues long: Zinc finger protein 275 (429 aa).

Residues 31–95 (VSDPSPNTDP…DGKRGSPQNL (65 aa)) form a disordered region. A compositionally biased stretch (polar residues) spans 34–51 (PSPNTDPAKYSESTSATR). Ser-76 bears the Phosphoserine mark. Basic and acidic residues predominate over residues 79 to 89 (FRQHGDSDGKR). C2H2-type zinc fingers lie at residues 101–123 (FACK…QRVH) and 129–151 (WECG…RKSH). The tract at residues 149–176 (KSHVAAEPQPGPSRALENAAEKREQMER) is disordered. The span at 167-176 (AAEKREQMER) shows a compositional bias: basic and acidic residues. 9 consecutive C2H2-type zinc fingers follow at residues 181–203 (FECE…LRVH), 209–231 (FDCE…QKLH), 237–259 (FACK…QRMH), 265–287 (FDCD…QRIH), 293–315 (YGCP…RRIH), 321–343 (YACG…ARIH), 349–371 (YACG…RRIH), 377–399 (YECD…RRIH), and 405–427 (CECS…QPTH).

The protein belongs to the krueppel C2H2-type zinc-finger protein family.

It localises to the nucleus. May be involved in transcriptional regulation. The sequence is that of Zinc finger protein 275 (ZNF275) from Homo sapiens (Human).